The sequence spans 411 residues: Tyrosine--tRNA ligase (411 aa).

Residues 48–57 carry the 'HIGH' region motif; that stretch reads PTAPDIHLGH. Residues 232 to 236 carry the 'KMSKS' region motif; sequence KMSKS. Lysine 235 lines the ATP pocket. The region spanning 347-409 is the S4 RNA-binding domain; the sequence is VLLPKVLFSA…GKRRFLKIIF (63 aa).

The protein belongs to the class-I aminoacyl-tRNA synthetase family. TyrS type 2 subfamily. In terms of assembly, homodimer.

The protein resides in the cytoplasm. It catalyses the reaction tRNA(Tyr) + L-tyrosine + ATP = L-tyrosyl-tRNA(Tyr) + AMP + diphosphate + H(+). In terms of biological role, catalyzes the attachment of tyrosine to tRNA(Tyr) in a two-step reaction: tyrosine is first activated by ATP to form Tyr-AMP and then transferred to the acceptor end of tRNA(Tyr). This chain is Tyrosine--tRNA ligase, found in Carboxydothermus hydrogenoformans (strain ATCC BAA-161 / DSM 6008 / Z-2901).